The following is a 185-amino-acid chain: Elongation factor P (185 aa).

This sequence belongs to the elongation factor P family.

Its subcellular location is the cytoplasm. It functions in the pathway protein biosynthesis; polypeptide chain elongation. Functionally, involved in peptide bond synthesis. Stimulates efficient translation and peptide-bond synthesis on native or reconstituted 70S ribosomes in vitro. Probably functions indirectly by altering the affinity of the ribosome for aminoacyl-tRNA, thus increasing their reactivity as acceptors for peptidyl transferase. This chain is Elongation factor P, found in Desulfitobacterium hafniense (strain DSM 10664 / DCB-2).